A 132-amino-acid polypeptide reads, in one-letter code: MTMTDPIADFLTRLRNANSAYHDEVTLPHSKIKANIAEILKSEGYISDYRTEDARVGKSLVVQLKYGPSRERSIAGLRRVSKPGLRVYAKSTNLPRVLGGLGVAIISTSSGLRTDRQASREGVGGEVLAYVW.

Belongs to the universal ribosomal protein uS8 family. In terms of assembly, part of the 30S ribosomal subunit. Contacts proteins S5 and S12.

In terms of biological role, one of the primary rRNA binding proteins, it binds directly to 16S rRNA central domain where it helps coordinate assembly of the platform of the 30S subunit. The protein is Small ribosomal subunit protein uS8 of Mycolicibacterium gilvum (strain PYR-GCK) (Mycobacterium gilvum (strain PYR-GCK)).